The chain runs to 246 residues: Phosphonates import ATP-binding protein PhnC (246 aa).

The 245-residue stretch at 2 to 246 (IKFENVSKVY…ILDEVYRKEG (245 aa)) folds into the ABC transporter domain. 35-42 (GTSGAGKS) contacts ATP.

The protein belongs to the ABC transporter superfamily. Phosphonates importer (TC 3.A.1.9.1) family. In terms of assembly, the complex is composed of two ATP-binding proteins (PhnC), two transmembrane proteins (PhnE) and a solute-binding protein (PhnD).

The protein resides in the cell membrane. The enzyme catalyses phosphonate(out) + ATP + H2O = phosphonate(in) + ADP + phosphate + H(+). In terms of biological role, part of the ABC transporter complex PhnCDE involved in phosphonates import. Responsible for energy coupling to the transport system. This Lactococcus lactis subsp. cremoris (strain SK11) protein is Phosphonates import ATP-binding protein PhnC.